A 195-amino-acid polypeptide reads, in one-letter code: Molybdenum cofactor guanylyltransferase (195 aa).

Residues Leu-10–Gly-12, Lys-23, Asn-51, Asp-69, and Asp-99 contribute to the GTP site. Position 99 (Asp-99) interacts with Mg(2+).

Belongs to the MobA family. As to quaternary structure, monomer. Mg(2+) is required as a cofactor.

It is found in the cytoplasm. It carries out the reaction Mo-molybdopterin + GTP + H(+) = Mo-molybdopterin guanine dinucleotide + diphosphate. Transfers a GMP moiety from GTP to Mo-molybdopterin (Mo-MPT) cofactor (Moco or molybdenum cofactor) to form Mo-molybdopterin guanine dinucleotide (Mo-MGD) cofactor. The sequence is that of Molybdenum cofactor guanylyltransferase from Histophilus somni (strain 2336) (Haemophilus somnus).